Reading from the N-terminus, the 945-residue chain is Protein translocase subunit SecA (945 aa).

ATP contacts are provided by residues Gln90, 108-112 (GEGKT), and Asp509. Residues 533-568 (VKPEDGHKPPVPLQRRSESSGFGEDKDVTTDNSKPL) form a disordered region. Residues 547–561 (RRSESSGFGEDKDVT) show a composition bias toward basic and acidic residues.

This sequence belongs to the SecA family. In terms of assembly, monomer and homodimer. Part of the essential Sec protein translocation apparatus which comprises SecA, SecYEG and auxiliary proteins SecDF. Other proteins may also be involved.

The protein localises to the cell inner membrane. Its subcellular location is the cellular thylakoid membrane. It localises to the cytoplasm. The catalysed reaction is ATP + H2O + cellular proteinSide 1 = ADP + phosphate + cellular proteinSide 2.. Part of the Sec protein translocase complex. Interacts with the SecYEG preprotein conducting channel. Has a central role in coupling the hydrolysis of ATP to the transfer of proteins into and across the cell membrane, serving as an ATP-driven molecular motor driving the stepwise translocation of polypeptide chains across the membrane. Functionally, probably participates in protein translocation into and across both the cytoplasmic and thylakoid membranes in cyanobacterial cells. The sequence is that of Protein translocase subunit SecA from Prochlorococcus marinus (strain MIT 9211).